Reading from the N-terminus, the 490-residue chain is WD repeat-containing protein JIP5 (490 aa).

7 WD repeats span residues 23–64 (KYND…ERMQ), 70–112 (QKKK…GSCR), 118–155 (PIES…ISKD), 157–196 (SSKD…NKFK), 242–284 (DQED…LMDQ), 286–327 (SRIK…HRVN), and 340–377 (GTAD…EEEE). Residues 368–490 (SAEGDDEEEE…SHGIRRFDGL (123 aa)) are disordered. 2 stretches are compositionally biased toward acidic residues: residues 370-406 (EGDD…EGDD) and 413-437 (EESD…EEST). The span at 438–448 (ETDHKNIEAES) shows a compositional bias: basic and acidic residues. The span at 450–461 (KQANKRQASQPK) shows a compositional bias: polar residues. Basic residues predominate over residues 469-484 (KQKLKQTSKLAHSHGI).

The protein belongs to the WD repeat WDR55 family.

It is found in the nucleus. The protein resides in the nucleolus. The protein is WD repeat-containing protein JIP5 (JIP5) of Meyerozyma guilliermondii (strain ATCC 6260 / CBS 566 / DSM 6381 / JCM 1539 / NBRC 10279 / NRRL Y-324) (Yeast).